The sequence spans 377 residues: ATP synthase gamma chain, chloroplastic (377 aa).

The N-terminal 55 residues, 1–55, are a transit peptide targeting the chloroplast; it reads MSCSNLTMLVSSKPSLSDSSALSFRSSVSPFQLPNHNTSGPSNPSRSSSVTPVHC. Residues 30-52 are disordered; sequence PFQLPNHNTSGPSNPSRSSSVTP. Positions 37–52 are enriched in low complexity; sequence NTSGPSNPSRSSSVTP. Residue cysteine 143 is part of the active site. Cysteine 253 and cysteine 259 are disulfide-bonded.

It belongs to the ATPase gamma chain family. F-type ATPases have 2 components, CF(1) - the catalytic core - and CF(0) - the membrane proton channel. CF(1) has five subunits: alpha(3), beta(3), gamma(1), delta(1), epsilon(1). CF(0) has four main subunits: a, b, b' and c.

It is found in the plastid. The protein localises to the chloroplast thylakoid membrane. Its function is as follows. Produces ATP from ADP in the presence of a proton gradient across the membrane. The gamma chain is believed to be important in regulating ATPase activity and the flow of protons through the CF(0) complex. The chain is ATP synthase gamma chain, chloroplastic (ATPC) from Nicotiana tabacum (Common tobacco).